Here is a 150-residue protein sequence, read N- to C-terminus: 3-hydroxyacyl-[acyl-carrier-protein] dehydratase FabZ (150 aa).

Residue H53 is part of the active site.

This sequence belongs to the thioester dehydratase family. FabZ subfamily.

It localises to the cytoplasm. The enzyme catalyses a (3R)-hydroxyacyl-[ACP] = a (2E)-enoyl-[ACP] + H2O. Functionally, involved in unsaturated fatty acids biosynthesis. Catalyzes the dehydration of short chain beta-hydroxyacyl-ACPs and long chain saturated and unsaturated beta-hydroxyacyl-ACPs. This is 3-hydroxyacyl-[acyl-carrier-protein] dehydratase FabZ from Photorhabdus laumondii subsp. laumondii (strain DSM 15139 / CIP 105565 / TT01) (Photorhabdus luminescens subsp. laumondii).